The primary structure comprises 267 residues: Tryptophan synthase alpha chain (267 aa).

Catalysis depends on proton acceptor residues Glu49 and Asp60.

The protein belongs to the TrpA family. Tetramer of two alpha and two beta chains.

It carries out the reaction (1S,2R)-1-C-(indol-3-yl)glycerol 3-phosphate + L-serine = D-glyceraldehyde 3-phosphate + L-tryptophan + H2O. Its pathway is amino-acid biosynthesis; L-tryptophan biosynthesis; L-tryptophan from chorismate: step 5/5. In terms of biological role, the alpha subunit is responsible for the aldol cleavage of indoleglycerol phosphate to indole and glyceraldehyde 3-phosphate. The sequence is that of Tryptophan synthase alpha chain from Carboxydothermus hydrogenoformans (strain ATCC BAA-161 / DSM 6008 / Z-2901).